A 767-amino-acid chain; its full sequence is Transducin-like enhancer protein 1 (767 aa).

Disordered stretches follow at residues M1–S26 and A200–S346. 3 stretches are compositionally biased toward basic and acidic residues: residues A200–P209, R235–D255, and N277–P289. The segment at S212–S274 is CCN domain. Positions P294–S306 are enriched in low complexity. Residues L324–S346 are compositionally biased toward polar residues. WD repeat units follow at residues G467–T498, N525–D555, S569–D599, G611–D641, L693–R723, and K734–E764.

Belongs to the WD repeat Groucho/TLE family. In terms of processing, ubiquitinated by XIAP/BIRC4. Abundantly expressed in brain, lung, testis and ovary in comparison with liver, heart, kidney and spleen. Ubiquitously expressed in the developing embryo. Present in unfertilized and fertilized eggs.

It localises to the nucleus. Functionally, nuclear effector molecule. The chain is Transducin-like enhancer protein 1 (esg1) from Xenopus laevis (African clawed frog).